The following is a 76-amino-acid chain: Translation initiation factor IF-1 (76 aa).

One can recognise an S1-like domain in the interval 1–76 (MEDMAKKDGV…TRGRIVYRYK (76 aa)).

Belongs to the IF-1 family. Component of the 30S ribosomal translation pre-initiation complex which assembles on the 30S ribosome in the order IF-2 and IF-3, IF-1 and N-formylmethionyl-tRNA(fMet); mRNA recruitment can occur at any time during PIC assembly.

It localises to the cytoplasm. Its function is as follows. One of the essential components for the initiation of protein synthesis. Stabilizes the binding of IF-2 and IF-3 on the 30S subunit to which N-formylmethionyl-tRNA(fMet) subsequently binds. Helps modulate mRNA selection, yielding the 30S pre-initiation complex (PIC). Upon addition of the 50S ribosomal subunit IF-1, IF-2 and IF-3 are released leaving the mature 70S translation initiation complex. This is Translation initiation factor IF-1 from Renibacterium salmoninarum (strain ATCC 33209 / DSM 20767 / JCM 11484 / NBRC 15589 / NCIMB 2235).